The following is a 109-amino-acid chain: uncharacterized protein (109 aa).

The protein belongs to the archaeal ATPase family.

This is an uncharacterized protein from Methanocaldococcus jannaschii (strain ATCC 43067 / DSM 2661 / JAL-1 / JCM 10045 / NBRC 100440) (Methanococcus jannaschii).